A 495-amino-acid chain; its full sequence is uncharacterized protein (495 aa).

Residues 337-360 (STSNRESDCSGNEDDSSNAKYAKK) form a disordered region.

This is an uncharacterized protein from Caenorhabditis elegans.